We begin with the raw amino-acid sequence, 876 residues long: MLMIVQLLVFALGLAVAVPIQNYTQSPSQRDESSQWVSPHYYPTPQGGRLQDVWQEAYARAKAIVGQMTIVEKVNLTTGTGWQLDPCVGNTGSVPRFGIPNLCLQDGPLGVRFADFVTGYPSGLATGATFNKDLFLQRGQALGHEFNSKGVHIALGPAVGPLGVKARGGRNFEAFGSDPYLQGTAAAATIKGLQENNVMACVKHFIGNEQEKYRQPDDINPATNQTTKEAISANIPDRAMHALYLWPFADSVRAGVGSVMCSYNRVNNTYACENSYMMNHLLKEELGFQGFVVSDWGAQLSGVYSAISGLDMSMPGEVYGGWNTGTSFWGQNLTKAIYNETVPIERLDDMATRILAALYATNSFPTEDHLPNFSSWTTKEYGNKYYADNTTEIVKVNYNVDPSNDFTEDTALKVAEESIVLLKNENNTLPISPEKAKRLLLSGIAAGPDPIGYQCEDQSCTNGALFQGWGSGSVGSPKYQVTPFEEISYLARKNKMQFDYIRESYDLAQVTKVASDAHLSIVVVSAASGEGYITVDGNQGDRKNLTLWNNGDKLIETVAENCANTVVVVTSTGQINFEGFADHPNVTAIVWAGPLGDRSGTAIANILFGKANPSGHLPFTIAKTDDDYIPIETYSPSSGEPEDNHLVENDLLVDYRYFEEKNIEPRYAFGYGLSYNEYEVSNAKVSAAKKVDEELPEPATYLSEFSYQNAKDSKNPSDAFAPADLNRVNEYLYPYLDSNVTLKDGNYEYPDGYSTEQRTTPNQPGGGLGGNDALWEVAYNSTDKFVPQGNSTDKFVPQLYLKHPEDGKFETPIQLRGFEKVELSPGEKKTVDLRLLRRDLSVWDTTRQSWIVESGTYEALIGVAVNDIKTSVLFTI.

The first 17 residues, 1–17 (MLMIVQLLVFALGLAVA), serve as a signal peptide directing secretion. N-linked (GlcNAc...) asparagine glycans are attached at residues asparagine 22, asparagine 75, asparagine 224, and asparagine 267. The active site involves aspartate 295. Asparagine 332, asparagine 339, asparagine 372, asparagine 389, asparagine 426, asparagine 544, asparagine 585, asparagine 739, asparagine 780, and asparagine 790 each carry an N-linked (GlcNAc...) asparagine glycan.

Belongs to the glycosyl hydrolase 3 family.

It carries out the reaction Hydrolysis of terminal, non-reducing beta-D-glucosyl residues with release of beta-D-glucose.. It participates in glycan metabolism; cellulose degradation. In Saccharomycopsis fibuligera (Yeast), this protein is Beta-glucosidase 1 (BGL1).